We begin with the raw amino-acid sequence, 1004 residues long: Liprin-beta homolog (1004 aa).

Low complexity-rich tracts occupy residues 50–63 (NGNSTSRSTTTIGS) and 149–161 (SPPSDLPTSSSSL). Disordered regions lie at residues 50–122 (NGNS…RSSR) and 135–161 (HRTDLGSDGSSGVESPPSDLPTSSSSL). 2 coiled-coil regions span residues 280–328 (CQEL…VNQS) and 364–396 (DEMSQLRTAVQRLMADNEHKSLQINTLRNALDE). 4 disordered regions span residues 341 to 366 (HTNGHSSGGYMSPLREHRSEKNDDEM), 432 to 497 (PSDS…GGNQ), 528 to 550 (NGNEGANHNYSSASLPRGVGKAS), and 648 to 686 (FSKLTRSTSQDQSNSFRRGSAARSTSTARLGSTNHLGTV). Residues 434-453 (DSMSHSTSFPVSLSSTTSNG) show a composition bias toward polar residues. Residues 458 to 474 (STVQSSSSYNSSLSAVS) show a composition bias toward low complexity. 2 stretches are compositionally biased toward polar residues: residues 531–541 (EGANHNYSSAS) and 648–684 (FSKLTRSTSQDQSNSFRRGSAARSTSTARLGSTNHLG). SAM domains follow at residues 698–762 (WRSE…IEED), 770–833 (WDVH…LKKA), and 858–930 (VVRW…LLGP).

This sequence belongs to the liprin family. Liprin-beta subfamily. Expressed in pharyngeal muscle, particularly posterior bulb, adjacent to the dorsal and ventral cord (but not in ventral cord neurons), and in body wall muscles.

Involved in the regulation of synaptic function at neuromuscular junctions. Together with the liprin-alpha protein syd-2, may play a role in regulating the structure of the neuronal region, called the active zone, from which synaptic vesicles send neurotransmitter signals across the synapse. Does not seem to be required for neuronal development. May regulate the disassembly of focal adhesions. Does not bind receptor-like tyrosine phosphatases type 2A. In Caenorhabditis elegans, this protein is Liprin-beta homolog.